The primary structure comprises 150 residues: UPF0178 protein Maqu_2186 (150 aa).

The protein belongs to the UPF0178 family.

The sequence is that of UPF0178 protein Maqu_2186 from Marinobacter nauticus (strain ATCC 700491 / DSM 11845 / VT8) (Marinobacter aquaeolei).